The primary structure comprises 388 residues: Tetratricopeptide repeat protein 4 (388 aa).

Methionine 1 carries the N-acetylmethionine modification. The residue at position 51 (serine 51) is a Phosphoserine. 3 TPR repeats span residues 79–112 (ARTY…KCAD), 117–150 (AVLY…KPCH), and 151–184 (LKAI…DATE). Serine 244 carries the post-translational modification Phosphoserine.

It belongs to the TTC4 family. In terms of assembly, interacts (via TPR repeats) with HSP90AB1. Interacts with HSPA8, CDC6, TBK1 and MSL1.

It localises to the nucleus. It is found in the nucleoplasm. Its subcellular location is the cytoplasm. Its function is as follows. May act as a co-chaperone for HSP90AB1. The protein is Tetratricopeptide repeat protein 4 (TTC4) of Bos taurus (Bovine).